A 1637-amino-acid polypeptide reads, in one-letter code: MNYILYILLILIIFSINNTFSIGSFVYTPDGYYNLYRINKFENFSKIPTKANSVNVEPHELYYPDICDSALKNKNSNEFSIDNFPGSPFLKANIKITKGSNMTLDPLLSIHPSYINILCIEGSFTAGSQQTLTLGGIIVLPGGNFHCNNCVLQFVDLSSTIIKIDPFGFLPGILSLGGSISLIGSQRILYSAKPIEDNVLEVNDISTLDPFNGFNVSIVSDSFPNVRTSRFTYNKNKLEMQDLTIPTTDLNIKLFFNDSGSLKFGGISTRTKSSIYITGDTKLHIENYLLDSIGKTSNKEYDDTKLTFSSDNPNNVTDIIIGKNQRFRNSLYIEFSNSVTIKNSVIIGNTGSSRSSLVFFQSNVNISGNLIVGTAGSSMIAQYGTEYIESSNNYFSLVLPNEFPTSPAFMDYGHEGNGIYSLSPNIFSTNDIFNGQKILYNFNFISRENVTGFDKDCFAPCDINSIVVPSLSQEPIDFSKNLVNPISINPVDYFLIVNSDEELKNTFFTIKDSTISSKIIVNLKGSGLVLKNIIGVNNFKLTGQVKRLDIYDSFFGSSTTPSLGDNGIKSSAVIIKNSSFYIDDFQLQNNQIYGSSIVPYLYELLNVDEFILVDSIFPTSQYQIPVGGKLDLIVKLVIISPVISRITCELESDNETITSSAISESVNKECKFPLTFKNDGSVNLKVTVKLKNVGDSEIMYIINFPKITIFSNYSFYSGWSMENSTENGIISVDGNSFKKGCSISSNDNSNNCTISNNIKYITNLPKLNISNDLNELFLNGITSINSNELVTITTRIDSETKYYQIQLFFIHQPIDDQPTPLSIYIENQPVFLLEPLESNSAPIFKNLTFNFDNINSLENINISFATRGNTYLTSMAIYSSLVIEYPIPVEKINLLPIIVPICVTVLVLLSILIVFFGARYYKHKKRRRLEIAVFGVELYSKKPSNNKSPVPSTPLIINSNQEQSSSNHISITVNRNSDIQTQSENNNLEPTTVETTTTTTTTAAGAILQTNVTLEMENLEIKPIINNNEPFFEDYSDEYDDSSDGAELNEDDVEDYINIIRGGNIKIEAEGELFVRQFERNTFDQEFFEYKKSKIPSPHLVPSLAHGDFIENPLNIIDILLDPVTNEIPLEHYLKTYKNRNGQSGKYRTNTQTHVLIADTIFQHCNDPDLPVSVSPYICDFGMNGRKSDLGEVCHDTITFKNKLSEPLYALFLFPEGDDSSITSSPFQSIELKPNVETSISLSVTLFSTTKYNEKVIVRFETLDVKQSWSTFVFLRLESELTNIIDFNEIIIKNYISEGTFGIVYRGIWRSSPVAVKLLKNEYVDHDEIEKEISLLERLRHPNILLYVGRFIFSGIHGIVTDYCSKGCLSKYIHENKYKITIIQKIRILIDISKACAYLHRNGITHRDLKPENILITSLNPKSLVCAKVSDFGTSKETNERYNLQTRRGTVAYMSNEILSQGSYTKSTDIYSFGMLCYELFSERIPYYSEPHWRIRELVLKNERPSLDQEIFKDTDISDIVTRCWSKNPSQRPTFDYLSKYLKHLLKKYDINNIIYDKDKKNKKKNKNNNNNNNNNNNNNNNNNNNNNNNDDHDDNNNNINDSDCDNNKNNNNNNNNNNNNNNNNNNNNNNNNNNNN.

Residues 1–19 (MNYILYILLILIIFSINNT) form the signal peptide. Topologically, residues 20 to 896 (FSIGSFVYTP…IPVEKINLLP (877 aa)) are extracellular. The helical transmembrane segment at 897–917 (IIVPICVTVLVLLSILIVFFG) threads the bilayer. Topologically, residues 918–1637 (ARYYKHKKRR…NNNNNNNNNN (720 aa)) are cytoplasmic. The segment covering 977 to 990 (SDIQTQSENNNLEP) has biased composition (polar residues). The segment at 977-1000 (SDIQTQSENNNLEPTTVETTTTTT) is disordered. The span at 991–1000 (TTVETTTTTT) shows a compositional bias: low complexity. The Protein kinase domain maps to 1290–1547 (IIIKNYISEG…LSKYLKHLLK (258 aa)). Residues 1296 to 1304 (ISEGTFGIV) and lysine 1317 contribute to the ATP site. Aspartate 1408 functions as the Proton acceptor in the catalytic mechanism. The segment at 1557 to 1637 (DKDKKNKKKN…NNNNNNNNNN (81 aa)) is disordered. 2 stretches are compositionally biased toward low complexity: residues 1568–1589 (NNNNNNNNNNNNNNNNNNNNNN) and 1597–1637 (NNNI…NNNN).

The protein in the N-terminal section; belongs to the GDT family. It in the C-terminal section; belongs to the protein kinase superfamily. TKL Ser/Thr protein kinase family.

It localises to the membrane. It catalyses the reaction L-seryl-[protein] + ATP = O-phospho-L-seryl-[protein] + ADP + H(+). It carries out the reaction L-threonyl-[protein] + ATP = O-phospho-L-threonyl-[protein] + ADP + H(+). Regulates the transition between growth and differentiation. In Dictyostelium discoideum (Social amoeba), this protein is Probable serine/threonine-protein kinase gdt2 (gdt2).